The sequence spans 150 residues: HTH-type transcriptional regulator LrpA (150 aa).

The 62-residue stretch at 5–66 (LDDIDRILVR…RINPEAVGHL (62 aa)) folds into the HTH asnC-type domain. The H-T-H motif DNA-binding region spans 24–43 (LSELATRAGLSVSAVQSRVR). Positions 100, 102, and 104 each coordinate L-phenylalanine.

Homohexadecamer in the absence of any added ligand. Homooctamer. Tetramer of dimers. In the presence of phenylalanine, the hexadecamer dissociates into an octamer, which further dissociates partially into lower-order oligomers.

Its activity is regulated as follows. The DNA-binding activity of LrpA is modulated by interaction of LrpA with various effector molecules, including amino acids and vitamins. The DNA binding affinity is decreased by several amino acids, including phenylalanine, tyrosine, tryptophan, histidine, leucine and aspartate. Preferentially binds to aromatic amino acids. Besides amino acids, the binding affinity is also reduced by vitamins, including B1, B3, B6, VC, B7, B9, B12, VA and VK3. In terms of biological role, transcriptional regulator that probably plays an important role in M.tuberculosis persistence. Regulates the expression of several genes, including lat, rsmG, whiB2, lsr2 and Rv2011c. Acts by binding directly to the promoter region of the target genes. This Mycobacterium tuberculosis (strain ATCC 25618 / H37Rv) protein is HTH-type transcriptional regulator LrpA.